The primary structure comprises 336 residues: Glyceraldehyde-3-phosphate dehydrogenase (336 aa).

Residues 12–13, Asp35, Arg79, and Ser121 each bind NAD(+); that span reads RI. Residues 152–154 and Thr183 each bind D-glyceraldehyde 3-phosphate; that span reads SCT. Residue Cys153 is the Nucleophile of the active site. An NAD(+)-binding site is contributed by Asn184. D-glyceraldehyde 3-phosphate contacts are provided by residues Arg198, 211–212, and Arg234; that span reads TG. An NAD(+)-binding site is contributed by Asn317.

This sequence belongs to the glyceraldehyde-3-phosphate dehydrogenase family. As to quaternary structure, homotetramer.

The protein resides in the cytoplasm. It carries out the reaction D-glyceraldehyde 3-phosphate + phosphate + NAD(+) = (2R)-3-phospho-glyceroyl phosphate + NADH + H(+). It participates in carbohydrate degradation; glycolysis; pyruvate from D-glyceraldehyde 3-phosphate: step 1/5. With respect to regulation, resistant to pentalenolactone. Catalyzes the oxidative phosphorylation of glyceraldehyde 3-phosphate (G3P) to 1,3-bisphosphoglycerate (BPG) using the cofactor NAD. The first reaction step involves the formation of a hemiacetal intermediate between G3P and a cysteine residue, and this hemiacetal intermediate is then oxidized to a thioester, with concomitant reduction of NAD to NADH. The reduced NADH is then exchanged with the second NAD, and the thioester is attacked by a nucleophilic inorganic phosphate to produce BPG. The protein is Glyceraldehyde-3-phosphate dehydrogenase (gap) of Streptomyces coelicolor (strain ATCC BAA-471 / A3(2) / M145).